Reading from the N-terminus, the 268-residue chain is Glutamate racemase (268 aa).

Substrate is bound by residues 10-11 and 42-43; these read DS and YG. The active-site Proton donor/acceptor is the Cys73. 74–75 contributes to the substrate binding site; that stretch reads NT. Cys184 serves as the catalytic Proton donor/acceptor. Residue 185–186 coordinates substrate; sequence TH.

This sequence belongs to the aspartate/glutamate racemases family.

It carries out the reaction L-glutamate = D-glutamate. It functions in the pathway cell wall biogenesis; peptidoglycan biosynthesis. Functionally, provides the (R)-glutamate required for cell wall biosynthesis. In Limosilactobacillus fermentum (strain NBRC 3956 / LMG 18251) (Lactobacillus fermentum), this protein is Glutamate racemase.